Consider the following 192-residue polypeptide: Putative ripening-related protein 2 (192 aa).

Positions Met1 to Gly26 are cleaved as a signal peptide.

The protein belongs to the kiwellin family.

The protein localises to the secreted. The polypeptide is Putative ripening-related protein 2 (Oryza sativa subsp. japonica (Rice)).